The sequence spans 387 residues: Apoptosis-inducing factor homolog B (387 aa).

FAD contacts are provided by residues Gly12–Gly16, Arg47, and Asp292.

The protein belongs to the FAD-dependent oxidoreductase family. The cofactor is FAD.

Functionally, putative FAD-dependent oxidoreductase. The sequence is that of Apoptosis-inducing factor homolog B (aifB) from Dictyostelium discoideum (Social amoeba).